The sequence spans 265 residues: Eukaryotic translation initiation factor 3 subunit J (265 aa).

Positions A24 to D34 are enriched in acidic residues. Residues A24–D74 are disordered. Over residues E35 to K45 the composition is skewed to basic and acidic residues. The segment covering P46–N57 has biased composition (basic residues). Coiled coils occupy residues R78–E106 and I190–K220.

The protein belongs to the eIF-3 subunit J family. As to quaternary structure, component of the eukaryotic translation initiation factor 3 (eIF-3) complex.

Its subcellular location is the cytoplasm. In terms of biological role, component of the eukaryotic translation initiation factor 3 (eIF-3) complex, which is involved in protein synthesis of a specialized repertoire of mRNAs and, together with other initiation factors, stimulates binding of mRNA and methionyl-tRNAi to the 40S ribosome. The eIF-3 complex specifically targets and initiates translation of a subset of mRNAs involved in cell proliferation. The chain is Eukaryotic translation initiation factor 3 subunit J from Candida glabrata (strain ATCC 2001 / BCRC 20586 / JCM 3761 / NBRC 0622 / NRRL Y-65 / CBS 138) (Yeast).